Consider the following 63-residue polypeptide: Large ribosomal subunit protein bL28 (63 aa).

The protein belongs to the bacterial ribosomal protein bL28 family.

The sequence is that of Large ribosomal subunit protein bL28 from Pelobacter propionicus (strain DSM 2379 / NBRC 103807 / OttBd1).